The following is a 323-amino-acid chain: Beta-ketoacyl-[acyl-carrier-protein] synthase III (323 aa).

Active-site residues include Cys113 and His250. Positions 251-255 are ACP-binding; that stretch reads QANKR. Residue Asn280 is part of the active site.

The protein belongs to the thiolase-like superfamily. FabH family. Homodimer.

The protein resides in the cytoplasm. The catalysed reaction is malonyl-[ACP] + acetyl-CoA + H(+) = 3-oxobutanoyl-[ACP] + CO2 + CoA. The protein operates within lipid metabolism; fatty acid biosynthesis. Functionally, catalyzes the condensation reaction of fatty acid synthesis by the addition to an acyl acceptor of two carbons from malonyl-ACP. Catalyzes the first condensation reaction which initiates fatty acid synthesis and may therefore play a role in governing the total rate of fatty acid production. Possesses both acetoacetyl-ACP synthase and acetyl transacylase activities. Its substrate specificity determines the biosynthesis of branched-chain and/or straight-chain of fatty acids. This is Beta-ketoacyl-[acyl-carrier-protein] synthase III from Chelativorans sp. (strain BNC1).